A 189-amino-acid polypeptide reads, in one-letter code: Large ribosomal subunit protein bL17 (189 aa).

Belongs to the bacterial ribosomal protein bL17 family. Part of the 50S ribosomal subunit. Contacts protein L32.

This chain is Large ribosomal subunit protein bL17, found in Rhodococcus jostii (strain RHA1).